Consider the following 62-residue polypeptide: Large ribosomal subunit protein uL30 (62 aa).

Belongs to the universal ribosomal protein uL30 family. Part of the 50S ribosomal subunit.

The sequence is that of Large ribosomal subunit protein uL30 from Cereibacter sphaeroides (strain ATCC 17029 / ATH 2.4.9) (Rhodobacter sphaeroides).